A 302-amino-acid chain; its full sequence is Putative peptide permease protein BOV_A0350 (302 aa).

The interval 1 to 22 is disordered; sequence MRSSIHASRLRKMGQSIPASTG. 6 helical membrane-spanning segments follow: residues 38–58, 101–121, 147–167, 200–222, 230–250, and 268–288; these read IFGL…PLWL, LLVA…IGAI, IFLL…VVVI, AGLG…VVYA, ILLE…AASW, and WQWL…NFIG. Residues 97–288 form the ABC transmembrane type-1 domain; sequence GRISLLVAVS…LAVLAINFIG (192 aa).

Belongs to the binding-protein-dependent transport system permease family. The complex is composed of two ATP-binding proteins (BOV_A0347 and BOV_A0348), two transmembrane proteins (BOV_A0350 and BOV_A0351) and a solute-binding protein (BOV_A0352).

Its subcellular location is the cell inner membrane. Functionally, probably part of an ABC transporter complex that could be involved in peptide import. Probably responsible for the translocation of the substrate across the membrane. The protein is Putative peptide permease protein BOV_A0350 of Brucella ovis (strain ATCC 25840 / 63/290 / NCTC 10512).